We begin with the raw amino-acid sequence, 151 residues long: UPF0208 membrane protein NT01EI_2692 (151 aa).

Helical transmembrane passes span 46–65 and 69–91; these read FAIR…QIAL and LGPA…WWLG.

This sequence belongs to the UPF0208 family.

The protein localises to the cell inner membrane. The chain is UPF0208 membrane protein NT01EI_2692 from Edwardsiella ictaluri (strain 93-146).